Consider the following 104-residue polypeptide: Large ribosomal subunit protein uL24 (104 aa).

The protein belongs to the universal ribosomal protein uL24 family. In terms of assembly, part of the 50S ribosomal subunit.

Its function is as follows. One of two assembly initiator proteins, it binds directly to the 5'-end of the 23S rRNA, where it nucleates assembly of the 50S subunit. Functionally, one of the proteins that surrounds the polypeptide exit tunnel on the outside of the subunit. The protein is Large ribosomal subunit protein uL24 of Pseudoalteromonas atlantica (strain T6c / ATCC BAA-1087).